The sequence spans 59 residues: MSESEQRHAHQCVSCGINIAGMSAATFKCPDCGQEISRCSKCRKQSNLYECPDCGFMGP.

4 consecutive short sequence motifs (c(P)XCG motif) follow at residues Cys12 to Gly16, Cys29 to Gly33, Cys39 to Arg43, and Cys51 to Gly55. 2 residues coordinate Zn(2+): Cys29 and Cys32. Zn(2+) is bound by residues Cys51 and Cys54.

In terms of assembly, monomer in solution.

In terms of biological role, zinc-binding protein that binds only one zinc ion. Is required for swarming and biofilm formation. In Haloferax volcanii (strain ATCC 29605 / DSM 3757 / JCM 8879 / NBRC 14742 / NCIMB 2012 / VKM B-1768 / DS2) (Halobacterium volcanii), this protein is Zinc finger protein HVO_2753.